Consider the following 213-residue polypeptide: Adenylate kinase (213 aa).

10-15 (GAGKGT) is a binding site for ATP. The segment at 30 to 59 (STGDIFRANIKNNTELGQKAKTYMDKGELV) is NMP. AMP is bound by residues Thr31, Arg36, 57-59 (ELV), 85-88 (GFPR), and Gln92. An LID region spans residues 126–163 (GRRACVGCGATYHIQFNPTKVEGICDACGEKLILRDDD). An ATP-binding site is contributed by Arg127. Zn(2+) is bound by residues Cys130 and Cys133. 136–137 (TY) is an ATP binding site. Zn(2+) contacts are provided by Cys150 and Cys153. Residues Arg160 and Arg171 each coordinate AMP. Gln199 contacts ATP.

The protein belongs to the adenylate kinase family. Monomer.

It is found in the cytoplasm. It carries out the reaction AMP + ATP = 2 ADP. The protein operates within purine metabolism; AMP biosynthesis via salvage pathway; AMP from ADP: step 1/1. Functionally, catalyzes the reversible transfer of the terminal phosphate group between ATP and AMP. Plays an important role in cellular energy homeostasis and in adenine nucleotide metabolism. This chain is Adenylate kinase, found in Lachnospira eligens (strain ATCC 27750 / DSM 3376 / VPI C15-48 / C15-B4) (Eubacterium eligens).